Consider the following 328-residue polypeptide: 4-hydroxythreonine-4-phosphate dehydrogenase (328 aa).

Residues His134 and Thr135 each coordinate substrate. A divalent metal cation is bound by residues His164, His209, and His265. Lys273, Asn282, and Arg291 together coordinate substrate.

It belongs to the PdxA family. As to quaternary structure, homodimer. It depends on Zn(2+) as a cofactor. Mg(2+) serves as cofactor. Requires Co(2+) as cofactor.

The protein localises to the cytoplasm. The catalysed reaction is 4-(phosphooxy)-L-threonine + NAD(+) = 3-amino-2-oxopropyl phosphate + CO2 + NADH. The protein operates within cofactor biosynthesis; pyridoxine 5'-phosphate biosynthesis; pyridoxine 5'-phosphate from D-erythrose 4-phosphate: step 4/5. Catalyzes the NAD(P)-dependent oxidation of 4-(phosphooxy)-L-threonine (HTP) into 2-amino-3-oxo-4-(phosphooxy)butyric acid which spontaneously decarboxylates to form 3-amino-2-oxopropyl phosphate (AHAP). The protein is 4-hydroxythreonine-4-phosphate dehydrogenase of Vibrio vulnificus (strain CMCP6).